The chain runs to 349 residues: Aldehyde reductase YahK (349 aa).

Cysteine 40, histidine 62, cysteine 93, cysteine 96, cysteine 99, cysteine 107, and cysteine 158 together coordinate Zn(2+).

The protein belongs to the zinc-containing alcohol dehydrogenase family. Requires Zn(2+) as cofactor.

It carries out the reaction a primary alcohol + NADP(+) = an aldehyde + NADPH + H(+). Functionally, catalyzes the reduction of a wide range of aldehydes into their corresponding alcohols. Has a strong preference for NADPH over NADH as the electron donor. Cannot use a ketone as substrate. Is a major source of NADPH-dependent aldehyde reductase activity in E.coli. The in vivo functions of YahK has yet to be determined. The chain is Aldehyde reductase YahK (yahK) from Escherichia coli (strain K12).